The chain runs to 1227 residues: Sterol 3-beta-glucosyltransferase (1227 aa).

Disordered regions lie at residues 1-76 (MLKG…AASP) and 104-189 (QLAT…MTSK). Over residues 48 to 57 (KHKEAERRLT) the composition is skewed to basic and acidic residues. Acidic residues predominate over residues 114 to 135 (AGADETEDEMDEAGDETGDDAD). The segment covering 154 to 171 (ESRRSTLFELSIEPHPES) has biased composition (basic and acidic residues). A compositionally biased stretch (basic residues) spans 179 to 189 (TKNRRSRMTSK). The 42-residue stretch at 188 to 229 (SKLRSKFNLDDDEELVREYPCWLLRDVLIQGHIYLTSRNLLF) folds into the GRAM 1 domain. The PH domain maps to 239–342 (SARLTGNLSI…WSSALKKQVF (104 aa)). Positions 449–469 (DAAIASEAAADAAAADTASHS) are enriched in low complexity. Disordered regions lie at residues 449–484 (DAAIASEAAADAAAADTASHSPSTNAEPRARGRSTE) and 523–550 (TLKLTTPRQPGSDAPQEPEPETTILESR). The region spanning 602–668 (KRFKAHFSLT…HDVENCYKEQ (67 aa)) is the GRAM 2 domain. 13 residues coordinate UDP-alpha-D-glucose: Ser-786, Arg-787, Asp-789, Asn-1060, Asn-1088, Val-1089, His-1091, His-1104, Ser-1107, Gly-1108, Thr-1109, Asp-1128, and Gln-1129.

It belongs to the glycosyltransferase 28 family.

The protein localises to the cytoplasm. The protein resides in the membrane. The enzyme catalyses a sterol + UDP-alpha-D-glucose = a sterol 3-beta-D-glucoside + UDP + H(+). The catalysed reaction is ergosterol + UDP-alpha-D-glucose = ergosteryl 3-beta-D-glucoside + UDP + H(+). Its function is as follows. Sterol glycosyltransferase responsible for the glycosylation of ergosterol to form ergosterol-glucoside. The protein is Sterol 3-beta-glucosyltransferase of Eremothecium gossypii (strain ATCC 10895 / CBS 109.51 / FGSC 9923 / NRRL Y-1056) (Yeast).